A 472-amino-acid chain; its full sequence is Glutamate--tRNA ligase (472 aa).

A 'HIGH' region motif is present at residues 9-19; the sequence is PSPTGYLHVGG. Zn(2+) is bound by residues Cys-98, Cys-100, Cys-125, and His-127. Residues 237–241 carry the 'KMSKS' region motif; it reads KLSKR. Lys-240 contributes to the ATP binding site.

The protein belongs to the class-I aminoacyl-tRNA synthetase family. Glutamate--tRNA ligase type 1 subfamily. As to quaternary structure, monomer. Requires Zn(2+) as cofactor.

Its subcellular location is the cytoplasm. The enzyme catalyses tRNA(Glu) + L-glutamate + ATP = L-glutamyl-tRNA(Glu) + AMP + diphosphate. Functionally, catalyzes the attachment of glutamate to tRNA(Glu) in a two-step reaction: glutamate is first activated by ATP to form Glu-AMP and then transferred to the acceptor end of tRNA(Glu). In Klebsiella pneumoniae (strain 342), this protein is Glutamate--tRNA ligase.